We begin with the raw amino-acid sequence, 107 residues long: UPF0060 membrane protein glr4174 (107 aa).

A run of 4 helical transmembrane segments spans residues M1–W21, L26–L46, A58–E78, and L87–P107.

This sequence belongs to the UPF0060 family.

It localises to the cell inner membrane. In Gloeobacter violaceus (strain ATCC 29082 / PCC 7421), this protein is UPF0060 membrane protein glr4174.